Consider the following 312-residue polypeptide: MANIVFKLSDKDITTLMSRISFDTENLPQGMKARAKYQNTTVNIYQSGKVMFQGNHAEAVSEELLPQHSQLNTNKTKKKNMANSFLEQTLMYDQFNCIGSDEAGSGDYFGPLTVCAAFVTKEHVPILKTLGVDDSKKLTDTKIVELAEQLVTFIPHSLLTLHNEKYNIQQAKGWTQVKMKAALHNEAIKNVLEKIDSSQLDYIVIDQFAKREVYSHYALSDIPLPKKTKFETKGESKSLAIAVASIISRYAFVTYMDQISKNINMTIPKGAGAKVDVIAAKIIKKYGLSRLDTISKKHFKNREKAQKILKPL.

An RNase H type-2 domain is found at 95-311 (FNCIGSDEAG…REKAQKILKP (217 aa)). 3 residues coordinate a divalent metal cation: D101, E102, and D206.

The protein belongs to the RNase HII family. RnhC subfamily. Mn(2+) serves as cofactor. The cofactor is Mg(2+).

Its subcellular location is the cytoplasm. The catalysed reaction is Endonucleolytic cleavage to 5'-phosphomonoester.. Functionally, endonuclease that specifically degrades the RNA of RNA-DNA hybrids. This Staphylococcus aureus (strain USA300) protein is Ribonuclease HIII.